Here is a 755-residue protein sequence, read N- to C-terminus: Photosystem I P700 chlorophyll a apoprotein A1 (755 aa).

8 consecutive transmembrane segments (helical) span residues 72-95 (IFSA…YHGA), 158-181 (LLCT…FHYH), 197-221 (LNHH…HVAI), 297-315 (QAHH…GHMY), 352-375 (WHAQ…QHMY), 391-417 (ISLF…IYMV), 439-461 (AIIS…FYVH), and 536-554 (FMVH…LILL). [4Fe-4S] cluster-binding residues include cysteine 578 and cysteine 587. The next 2 helical transmembrane spans lie at 594 to 615 (HVFL…HFSW) and 669 to 691 (LSAY…MFLF). Histidine 680 lines the chlorophyll a' pocket. Residues methionine 688 and tyrosine 696 each coordinate chlorophyll a. Tryptophan 697 is a binding site for phylloquinone. Residues 729–749 (AVGVAHYLLGGIVTTWAFFLA) traverse the membrane as a helical segment.

The protein belongs to the PsaA/PsaB family. The PsaA/B heterodimer binds the P700 chlorophyll special pair and subsequent electron acceptors. PSI consists of a core antenna complex that captures photons, and an electron transfer chain that converts photonic excitation into a charge separation. The cyanobacterial PSI reaction center is composed of one copy each of PsaA,B,C,D,E,F,I,J,K,L,M and X, and forms trimeric complexes. PSI electron transfer chain: 5 chlorophyll a, 1 chlorophyll a', 2 phylloquinones and 3 4Fe-4S clusters. PSI core antenna: 90 chlorophyll a, 22 carotenoids, 3 phospholipids and 1 galactolipid. P700 is a chlorophyll a/chlorophyll a' dimer, A0 is one or more chlorophyll a, A1 is one or both phylloquinones and FX is a shared 4Fe-4S iron-sulfur center. is required as a cofactor.

It is found in the cellular thylakoid membrane. The enzyme catalyses reduced [plastocyanin] + hnu + oxidized [2Fe-2S]-[ferredoxin] = oxidized [plastocyanin] + reduced [2Fe-2S]-[ferredoxin]. PsaA and PsaB bind P700, the primary electron donor of photosystem I (PSI), as well as the electron acceptors A0, A1 and FX. PSI is a plastocyanin/cytochrome c6-ferredoxin oxidoreductase, converting photonic excitation into a charge separation, which transfers an electron from the donor P700 chlorophyll pair to the spectroscopically characterized acceptors A0, A1, FX, FA and FB in turn. Oxidized P700 is reduced on the lumenal side of the thylakoid membrane by plastocyanin or cytochrome c6. In Synechococcus sp. (strain JA-3-3Ab) (Cyanobacteria bacterium Yellowstone A-Prime), this protein is Photosystem I P700 chlorophyll a apoprotein A1.